The chain runs to 674 residues: DNA ligase (674 aa).

NAD(+)-binding positions include 36–40 (DSVYD), 85–86 (SL), and Glu116. Residue Lys118 is the N6-AMP-lysine intermediate of the active site. Residues Arg139, Glu176, Lys292, and Lys316 each coordinate NAD(+). Positions 410, 413, 428, and 433 each coordinate Zn(2+). The BRCT domain occupies 596–674 (PSSGNIAGKT…EADLLKFLTN (79 aa)).

It belongs to the NAD-dependent DNA ligase family. LigA subfamily. The cofactor is Mg(2+). Requires Mn(2+) as cofactor.

The enzyme catalyses NAD(+) + (deoxyribonucleotide)n-3'-hydroxyl + 5'-phospho-(deoxyribonucleotide)m = (deoxyribonucleotide)n+m + AMP + beta-nicotinamide D-nucleotide.. Functionally, DNA ligase that catalyzes the formation of phosphodiester linkages between 5'-phosphoryl and 3'-hydroxyl groups in double-stranded DNA using NAD as a coenzyme and as the energy source for the reaction. It is essential for DNA replication and repair of damaged DNA. This is DNA ligase from Rippkaea orientalis (strain PCC 8801 / RF-1) (Cyanothece sp. (strain PCC 8801)).